Here is a 95-residue protein sequence, read N- to C-terminus: Aspartyl/glutamyl-tRNA(Asn/Gln) amidotransferase subunit C (95 aa).

This sequence belongs to the GatC family. As to quaternary structure, heterotrimer of A, B and C subunits.

The catalysed reaction is L-glutamyl-tRNA(Gln) + L-glutamine + ATP + H2O = L-glutaminyl-tRNA(Gln) + L-glutamate + ADP + phosphate + H(+). It catalyses the reaction L-aspartyl-tRNA(Asn) + L-glutamine + ATP + H2O = L-asparaginyl-tRNA(Asn) + L-glutamate + ADP + phosphate + 2 H(+). Its function is as follows. Allows the formation of correctly charged Asn-tRNA(Asn) or Gln-tRNA(Gln) through the transamidation of misacylated Asp-tRNA(Asn) or Glu-tRNA(Gln) in organisms which lack either or both of asparaginyl-tRNA or glutaminyl-tRNA synthetases. The reaction takes place in the presence of glutamine and ATP through an activated phospho-Asp-tRNA(Asn) or phospho-Glu-tRNA(Gln). The polypeptide is Aspartyl/glutamyl-tRNA(Asn/Gln) amidotransferase subunit C (Methylobacterium radiotolerans (strain ATCC 27329 / DSM 1819 / JCM 2831 / NBRC 15690 / NCIMB 10815 / 0-1)).